A 367-amino-acid polypeptide reads, in one-letter code: Undecaprenyl-phosphate alpha-N-acetylglucosaminyl 1-phosphate transferase (367 aa).

Transmembrane regions (helical) follow at residues 3-23, 45-65, 69-89, 129-149, 158-178, 187-207, 213-233, 242-262, and 318-338; these read LLTA…FIFL, GVIP…MFGL, YIPH…VGAM, WELV…WAAI, IDGL…LILW, MWCF…LGIL, VFMG…LLLE, ISPV…VAIM, and VPEW…GYCI.

Belongs to the glycosyltransferase 4 family. WecA subfamily. It depends on Mg(2+) as a cofactor. Mn(2+) is required as a cofactor.

The protein resides in the cell inner membrane. It catalyses the reaction di-trans,octa-cis-undecaprenyl phosphate + UDP-N-acetyl-alpha-D-glucosamine = N-acetyl-alpha-D-glucosaminyl-di-trans,octa-cis-undecaprenyl diphosphate + UMP. The protein operates within bacterial outer membrane biogenesis; LPS O-antigen biosynthesis. Its pathway is bacterial outer membrane biogenesis; enterobacterial common antigen biosynthesis. Its activity is regulated as follows. Inhibited by tunicamycin. In terms of biological role, catalyzes the transfer of the GlcNAc-1-phosphate moiety from UDP-GlcNAc onto the carrier lipid undecaprenyl phosphate (C55-P), yielding GlcNAc-pyrophosphoryl-undecaprenyl (GlcNAc-PP-C55). This chain is Undecaprenyl-phosphate alpha-N-acetylglucosaminyl 1-phosphate transferase, found in Salmonella typhimurium (strain LT2 / SGSC1412 / ATCC 700720).